A 209-amino-acid chain; its full sequence is Pyrrolidone-carboxylate peptidase (209 aa).

Residues Glu79, Cys142, and His164 contribute to the active site.

The protein belongs to the peptidase C15 family. Homotetramer.

The protein resides in the cytoplasm. It carries out the reaction Release of an N-terminal pyroglutamyl group from a polypeptide, the second amino acid generally not being Pro.. Its function is as follows. Removes 5-oxoproline from various penultimate amino acid residues except L-proline. This chain is Pyrrolidone-carboxylate peptidase, found in Saccharolobus islandicus (strain Y.N.15.51 / Yellowstone #2) (Sulfolobus islandicus).